Here is an 893-residue protein sequence, read N- to C-terminus: MTSTAPDNSRNRADALPKSWDPSAVEAEMYERWVSAGYFTADPASGKPAYSIVLPPPNVTGTLHMGHALDHTLMDTLARRKRMQGYEVLWLPGMDHAGIATQTVVEKQLAVDGKTKEDFGRELFVEKVWDWKRESGGAIQWQMRALGDGVDWSRDRFTMDEGLSRAVQTMFKRLYDAGLIYRAERLVNWSPELRTAISDIEVKHEDVEGELVSLRYGSLNDDEPHVVVATTRVETMLGDTAVAVHPDDPRYRDLIGTTLEHPITGRQIPIVADDYVDPEFGSGAVKITPAHDPNDFEIGLRHNLPMPTIMDERGRIANTGTEFDGMDRFEARVKVRERLAREGRVVAEKRPYIHSVGHSERTGEPIEPRLSMQWWVKVEALAKAAGDAVRNGQVVIHPASQEPRWFEWVDNMHDWTISRQLWWGHRIPIWYGPDGEVVCLGPGETPPEGWVQDPDVLDTWFSSGLWPFSTMGWPDATPELTKFYPTSVLVTGYDILFFWVARMMMFGMYVAEDPALTAGKDPGQVQVPFKDIFLHGLIRDQHGKKMSKSRGNGIDPLDWIRSYGADALRFTLARGAQPGGDLSVGEPHALASRSFVTKLFNATKFALLNGAAPGELPDRGSLTDADRWILDRLDEVLAEVDAAFDAYEFGKACEALYHFAWDELCDWYLELAKVQFAADGARAESTRTVLGTVLDAVLRLLHPVIPFVTESLWKALTGGESVVVAAWPTASGVTPDADAARRIADAQRLITEIRRFRSDQGLADKQKVSAKLIGVDSAELDALAPAIAALARLTEAGPDFAATASVEVRLSGATVTVELDTSGSVDLEAERKRLEKDLAAAQKELATTEGKLGNEAFLAKAPEQVVDKIRTRRDVAAAEVARIGARLAELGAR.

Residues 57–67 (PNVTGTLHMGH) carry the 'HIGH' region motif. The 'KMSKS' region motif lies at 545 to 549 (KMSKS). An ATP-binding site is contributed by Lys-548. Residues 821–855 (TSGSVDLEAERKRLEKDLAAAQKELATTEGKLGNE) adopt a coiled-coil conformation.

Belongs to the class-I aminoacyl-tRNA synthetase family. ValS type 1 subfamily. As to quaternary structure, monomer.

It is found in the cytoplasm. The enzyme catalyses tRNA(Val) + L-valine + ATP = L-valyl-tRNA(Val) + AMP + diphosphate. In terms of biological role, catalyzes the attachment of valine to tRNA(Val). As ValRS can inadvertently accommodate and process structurally similar amino acids such as threonine, to avoid such errors, it has a 'posttransfer' editing activity that hydrolyzes mischarged Thr-tRNA(Val) in a tRNA-dependent manner. In Nocardia farcinica (strain IFM 10152), this protein is Valine--tRNA ligase.